Here is a 217-residue protein sequence, read N- to C-terminus: EF-hand domain-containing protein D2 homolog (217 aa).

Residues M1–S28 show a composition bias toward low complexity. The segment at M1–E29 is disordered. 2 consecutive EF-hand domains span residues N69–P104 and Q105–G140. Ca(2+) contacts are provided by D82, D86, E93, D118, D120, D122, K124, and E129. A compositionally biased stretch (basic and acidic residues) spans E191–Q204. The interval E191–Q217 is disordered. Low complexity predominate over residues R206–Q217.

The protein is EF-hand domain-containing protein D2 homolog (Swip-1) of Drosophila melanogaster (Fruit fly).